The chain runs to 340 residues: Heat-inducible transcription repressor HrcA (340 aa).

Belongs to the HrcA family.

Negative regulator of class I heat shock genes (grpE-dnaK-dnaJ and groELS operons). Prevents heat-shock induction of these operons. The chain is Heat-inducible transcription repressor HrcA from Burkholderia mallei (strain NCTC 10247).